The sequence spans 824 residues: Disintegrin and metalloproteinase domain-containing protein 17 (824 aa).

An N-terminal signal peptide occupies residues M1 to A17. Residues P18–R214 constitute a propeptide that is removed on maturation. Residues N103, N157, and N174 are each glycosylated (N-linked (GlcNAc...) asparagine). Residues K182–V189 carry the Cysteine switch motif. C184 lines the Zn(2+) pocket. Over R215 to N671 the chain is Extracellular. Positions N223 to S474 constitute a Peptidase M12B domain. Intrachain disulfides connect C225/C333, C365/C469, and C423/C453. A glycan (N-linked (GlcNAc...) asparagine) is linked at N264. Residue H405 participates in Zn(2+) binding. E406 is an active-site residue. The Zn(2+) site is built by H409 and H415. N-linked (GlcNAc...) asparagine glycosylation is found at N452, N498, N539, and N551. In terms of domain architecture, Disintegrin spans N475 to D563. Disulfide bonds link C534–C555, C573–C582, C578–C591, and C593–C600. N-linked (GlcNAc...) asparagine glycosylation is present at N594. The interval C603–N671 is crambin-like. A helical transmembrane segment spans residues I672–H692. The Cytoplasmic portion of the chain corresponds to C693 to C824. Short sequence motifs (SH3-binding) lie at residues P731–R738 and P741–A748. A disordered region spans residues A732–C824. The residue at position 735 (T735) is a Phosphothreonine; by MAPK14. Low complexity predominate over residues P741–P752. Position 761 is a phosphothreonine (T761). S767 carries the phosphoserine modification. 3 stretches are compositionally biased toward basic and acidic residues: residues T768–P781, S791–A807, and N815–C824. Phosphoserine is present on residues S791 and S819.

In terms of assembly, interacts with MAD2L1, MAPK14 and MUC1. Interacts with iRhom1/RHBDF1 and iRhom2/RHBDF2. Interacts with FRMD8 via its interaction with iRhom1/RHBDF1 and iRhom2/RHBDF2. Interacts with TSPAN8. It depends on Zn(2+) as a cofactor. Post-translationally, the precursor is cleaved by a furin endopeptidase. Phosphorylated. Stimulation by growth factor or phorbol 12-myristate 13-acetate induces phosphorylation of Ser-819 but decreases phosphorylation of Ser-791. Phosphorylation at Thr-735 by MAPK14 is required for ADAM17-mediated ectodomain shedding. As to expression, ubiquitously expressed. Expressed at highest levels in adult heart, placenta, skeletal muscle, pancreas, spleen, thymus, prostate, testes, ovary and small intestine, and in fetal brain, lung, liver and kidney. Expressed in natural killer cells (at protein level).

It is found in the cell membrane. It carries out the reaction Narrow endopeptidase specificity. Cleaves Pro-Leu-Ala-Gln-Ala-|-Val-Arg-Ser-Ser-Ser in the membrane-bound, 26-kDa form of tumor necrosis factor alpha (TNFalpha). Similarly cleaves other membrane-anchored, cell-surface proteins to 'shed' the extracellular domains.. Its function is as follows. Transmembrane metalloprotease which mediates the ectodomain shedding of a myriad of transmembrane proteins including adhesion proteins, growth factor precursors and cytokines important for inflammation and immunity. Cleaves the membrane-bound precursor of TNF-alpha to its mature soluble form. Responsible for the proteolytical release of soluble JAM3 from endothelial cells surface. Responsible for the proteolytic release of several other cell-surface proteins, including p75 TNF-receptor, interleukin 1 receptor type II, p55 TNF-receptor, transforming growth factor-alpha, L-selectin, growth hormone receptor, MUC1 and the amyloid precursor protein. Acts as an activator of Notch pathway by mediating cleavage of Notch, generating the membrane-associated intermediate fragment called Notch extracellular truncation (NEXT). Plays a role in the proteolytic processing of ACE2. Plays a role in hemostasis through shedding of GP1BA, the platelet glycoprotein Ib alpha chain. Mediates the proteolytic cleavage of LAG3, leading to release the secreted form of LAG3. Mediates the proteolytic cleavage of IL6R, leading to the release of secreted form of IL6R. Mediates the proteolytic cleavage and shedding of FCGR3A upon NK cell stimulation, a mechanism that allows for increased NK cell motility and detachment from opsonized target cells. Cleaves TREM2, resulting in shedding of the TREM2 ectodomain. This Homo sapiens (Human) protein is Disintegrin and metalloproteinase domain-containing protein 17.